A 133-amino-acid polypeptide reads, in one-letter code: MEEDQELERKISGLKTSMAEGERKTALEMVQAAGTDRHCVTFVLHEEDHTLGNSLRYMIMKNPEVEFCGYTTTHPSESKINLRIQTRGTLPAVEPFQRGLNELMNVCQHVLDKFEASIKDYKDQKASRNESTF.

An N-acetylmethionine modification is found at Met-1.

The protein belongs to the archaeal Rpo11/eukaryotic RPB11/RPC19 RNA polymerase subunit family. In terms of assembly, component of the RNA polymerase I and RNA polymerase III complexes consisting of at least 13 and 17 subunits, respectively. Pol I complex consists of a ten-subunit catalytic core composed of POLR1A/RPA1, POLR1B/RPA2, POLR1C/RPAC1, POLR1D/RPAC2, POLR1H/RPA12, POLR2E/RPABC1, POLR2F/RPABC2, POLR2H/RPABC3, POLR2K/RPABC4 and POLR2L/RPABC5; a mobile stalk subunit POLR1F/RPA43 protruding from the core and additional subunits homologous to general transcription factors POLR1E/RPA49 and POLR1G/RPA34. Part of Pol I pre-initiation complex (PIC), in which Pol I core assembles with RRN3 and promoter-bound UTBF and SL1/TIF-IB complex. Pol III complex consists of a ten-subunit catalytic core composed of POLR3A/RPC1, POLR3B/RPC2, POLR1C/RPAC1, POLR1D/RPAC2, POLR3K/RPC10, POLR2E/RPABC1, POLR2F/RPABC2, POLR2H/RPABC3, POLR2K/RPABC4 and POLR2L/RPABC5; a mobile stalk composed of two subunits POLR3H/RPC8 and CRCP/RPC9, protruding from the core and functioning primarily in transcription initiation; and additional subunits homologous to general transcription factors of the RNA polymerase II machinery, POLR3C/RPC3-POLR3F/RPC6-POLR3G/RPC7 heterotrimer required for transcription initiation and POLR3D/RPC4-POLR3E/RPC5 heterodimer involved in both transcription initiation and termination.

It is found in the nucleus. Its subcellular location is the nucleolus. In terms of biological role, DNA-dependent RNA polymerase catalyzes the transcription of DNA into RNA using the four ribonucleoside triphosphates as substrates. Common component of RNA polymerases I and III which synthesize ribosomal RNA precursors and short non-coding RNAs including 5S rRNA, snRNAs, tRNAs and miRNAs, respectively. The sequence is that of DNA-directed RNA polymerases I and III subunit RPAC2 from Homo sapiens (Human).